The chain runs to 122 residues: Small ribosomal subunit protein uS12 (122 aa).

D89 is subject to 3-methylthioaspartic acid.

The protein belongs to the universal ribosomal protein uS12 family. Part of the 30S ribosomal subunit. Contacts proteins S8 and S17. May interact with IF1 in the 30S initiation complex.

Functionally, with S4 and S5 plays an important role in translational accuracy. In terms of biological role, interacts with and stabilizes bases of the 16S rRNA that are involved in tRNA selection in the A site and with the mRNA backbone. Located at the interface of the 30S and 50S subunits, it traverses the body of the 30S subunit contacting proteins on the other side and probably holding the rRNA structure together. The combined cluster of proteins S8, S12 and S17 appears to hold together the shoulder and platform of the 30S subunit. This Corynebacterium glutamicum (strain R) protein is Small ribosomal subunit protein uS12.